We begin with the raw amino-acid sequence, 160 residues long: Protransforming growth factor alpha (160 aa).

A signal peptide spans 1–23 (MVPSAGQLALFALGIVLAACQAL). A propeptide spans 24–39 (ENSTSPLSADPPVAAA) (removed in mature form). The Extracellular portion of the chain corresponds to 24–98 (ENSTSPLSAD…AVVAASQKKQ (75 aa)). Asn-25 carries an N-linked (GlcNAc...) asparagine glycan. In terms of domain architecture, EGF-like spans 43–83 (HFNDCPDSHTQFCFHGTCRFLVQEDKPACVCHSGYVGARCE). Intrachain disulfides connect Cys-47–Cys-60, Cys-55–Cys-71, and Cys-73–Cys-82. Positions 90–160 (VVAASQKKQA…TACCHSETVV (71 aa)) are cleaved as a propeptide — removed in mature form. Residues 99-124 (AITALVVVSIVALAVLIITCVLIHCC) traverse the membrane as a helical segment. Over 125–160 (QVRKHCEWCRALICRHEKPSALLKGRTACCHSETVV) the chain is Cytoplasmic. Residues Cys-153 and Cys-154 are each lipidated (S-palmitoyl cysteine).

Interacts with the PDZ domains of MAGI3, SDCBP and SNTA1. The interaction with SDCBP, is required for the targeting to the cell surface. In the endoplasmic reticulum, in its immature form (i.e. with a prosegment and lacking full N-glycosylation), interacts with CNIH. In the Golgi apparatus, may form a complex with CNIH and GORASP2. Interacts (via cytoplasmic C-terminal domain) with NKD2. In terms of tissue distribution, isoform 1, isoform 3 and isoform 4 are expressed in keratinocytes and tumor-derived cell lines.

It is found in the secreted. Its subcellular location is the extracellular space. It localises to the cell membrane. Functionally, TGF alpha is a mitogenic polypeptide that is able to bind to the EGF receptor/EGFR and to act synergistically with TGF beta to promote anchorage-independent cell proliferation in soft agar. This Homo sapiens (Human) protein is Protransforming growth factor alpha (TGFA).